The primary structure comprises 466 residues: 3-isopropylmalate dehydratase large subunit (466 aa).

3 residues coordinate [4Fe-4S] cluster: Cys347, Cys407, and Cys410.

This sequence belongs to the aconitase/IPM isomerase family. LeuC type 1 subfamily. Heterodimer of LeuC and LeuD. It depends on [4Fe-4S] cluster as a cofactor.

It catalyses the reaction (2R,3S)-3-isopropylmalate = (2S)-2-isopropylmalate. It participates in amino-acid biosynthesis; L-leucine biosynthesis; L-leucine from 3-methyl-2-oxobutanoate: step 2/4. Functionally, catalyzes the isomerization between 2-isopropylmalate and 3-isopropylmalate, via the formation of 2-isopropylmaleate. The chain is 3-isopropylmalate dehydratase large subunit from Shewanella piezotolerans (strain WP3 / JCM 13877).